Here is a 252-residue protein sequence, read N- to C-terminus: MIKKRIIPCLDVKDGRVVKGIQFKGLRDIGNPVDLAMYYNEAGADELVFLDISKTEEGHSLMLEVIEQTASRLFIPLTVGGGIQSLDDITQLLNHGADKVSLNSSALKNPQLIKQASDKFGRQCICIAIDSYYDPERKAHYCCTTGGKKMTNIKVYDWVQQVEQLGAGELLVTSMGHDGMKQGFDIEHLANIKSLVNIPIIASGGGGNAQHFVELFDQTDVSAGLAASILHDRETTVQSIKEVIRQGGIAVR.

Residues aspartate 11 and aspartate 130 contribute to the active site.

The protein belongs to the HisA/HisF family. Heterodimer of HisH and HisF.

It is found in the cytoplasm. The enzyme catalyses 5-[(5-phospho-1-deoxy-D-ribulos-1-ylimino)methylamino]-1-(5-phospho-beta-D-ribosyl)imidazole-4-carboxamide + L-glutamine = D-erythro-1-(imidazol-4-yl)glycerol 3-phosphate + 5-amino-1-(5-phospho-beta-D-ribosyl)imidazole-4-carboxamide + L-glutamate + H(+). It functions in the pathway amino-acid biosynthesis; L-histidine biosynthesis; L-histidine from 5-phospho-alpha-D-ribose 1-diphosphate: step 5/9. Functionally, IGPS catalyzes the conversion of PRFAR and glutamine to IGP, AICAR and glutamate. The HisF subunit catalyzes the cyclization activity that produces IGP and AICAR from PRFAR using the ammonia provided by the HisH subunit. This Staphylococcus aureus (strain USA300) protein is Imidazole glycerol phosphate synthase subunit HisF.